The primary structure comprises 388 residues: Flap endonuclease 1 (388 aa).

The N-domain stretch occupies residues 1–104 (MGILGLSKLI…GELAKRAERR (104 aa)). Mg(2+) is bound at residue D34. R47 and R70 together coordinate DNA. 5 residues coordinate Mg(2+): D86, E158, E160, D179, and D181. The I-domain stretch occupies residues 122–253 (EIEKFNRRLV…KRAIELINNY (132 aa)). Residue E158 participates in DNA binding. DNA contacts are provided by G231 and D233. Residue D233 coordinates Mg(2+). An interaction with PCNA region spans residues 336-344 (TQVRLDSFF). The segment at 343 to 388 (FFKTLPSTPSATNAAKRKAEEAKKSANNKKAKTSGGGGGGRGRRPK) is disordered.

Belongs to the XPG/RAD2 endonuclease family. FEN1 subfamily. Interacts with PCNA. Three molecules of FEN1 bind to one PCNA trimer with each molecule binding to one PCNA monomer. PCNA stimulates the nuclease activity without altering cleavage specificity. Mg(2+) serves as cofactor. Post-translationally, phosphorylated. Phosphorylation upon DNA damage induces relocalization to the nuclear plasma.

It localises to the nucleus. The protein resides in the nucleolus. The protein localises to the nucleoplasm. Its subcellular location is the mitochondrion. In terms of biological role, structure-specific nuclease with 5'-flap endonuclease and 5'-3' exonuclease activities involved in DNA replication and repair. During DNA replication, cleaves the 5'-overhanging flap structure that is generated by displacement synthesis when DNA polymerase encounters the 5'-end of a downstream Okazaki fragment. It enters the flap from the 5'-end and then tracks to cleave the flap base, leaving a nick for ligation. Also involved in the long patch base excision repair (LP-BER) pathway, by cleaving within the apurinic/apyrimidinic (AP) site-terminated flap. Acts as a genome stabilization factor that prevents flaps from equilibrating into structures that lead to duplications and deletions. Also possesses 5'-3' exonuclease activity on nicked or gapped double-stranded DNA, and exhibits RNase H activity. Also involved in replication and repair of rDNA and in repairing mitochondrial DNA. The polypeptide is Flap endonuclease 1 (Drosophila ananassae (Fruit fly)).